A 219-amino-acid polypeptide reads, in one-letter code: Thiamine-phosphate synthase (219 aa).

4-amino-2-methyl-5-(diphosphooxymethyl)pyrimidine is bound by residues 44–48 (QFREK) and N79. Mg(2+) contacts are provided by D80 and D99. Residue S117 participates in 4-amino-2-methyl-5-(diphosphooxymethyl)pyrimidine binding. 143–145 (TST) is a 2-[(2R,5Z)-2-carboxy-4-methylthiazol-5(2H)-ylidene]ethyl phosphate binding site. K146 lines the 4-amino-2-methyl-5-(diphosphooxymethyl)pyrimidine pocket. 2-[(2R,5Z)-2-carboxy-4-methylthiazol-5(2H)-ylidene]ethyl phosphate is bound by residues G175 and 195-196 (IS).

This sequence belongs to the thiamine-phosphate synthase family. Requires Mg(2+) as cofactor.

The enzyme catalyses 2-[(2R,5Z)-2-carboxy-4-methylthiazol-5(2H)-ylidene]ethyl phosphate + 4-amino-2-methyl-5-(diphosphooxymethyl)pyrimidine + 2 H(+) = thiamine phosphate + CO2 + diphosphate. It catalyses the reaction 2-(2-carboxy-4-methylthiazol-5-yl)ethyl phosphate + 4-amino-2-methyl-5-(diphosphooxymethyl)pyrimidine + 2 H(+) = thiamine phosphate + CO2 + diphosphate. The catalysed reaction is 4-methyl-5-(2-phosphooxyethyl)-thiazole + 4-amino-2-methyl-5-(diphosphooxymethyl)pyrimidine + H(+) = thiamine phosphate + diphosphate. It participates in cofactor biosynthesis; thiamine diphosphate biosynthesis; thiamine phosphate from 4-amino-2-methyl-5-diphosphomethylpyrimidine and 4-methyl-5-(2-phosphoethyl)-thiazole: step 1/1. Condenses 4-methyl-5-(beta-hydroxyethyl)thiazole monophosphate (THZ-P) and 2-methyl-4-amino-5-hydroxymethyl pyrimidine pyrophosphate (HMP-PP) to form thiamine monophosphate (TMP). This Bacillus cereus (strain AH187) protein is Thiamine-phosphate synthase.